The primary structure comprises 157 residues: uncharacterized protein (157 aa).

Belongs to the mimivirus L242/L243 family.

This is an uncharacterized protein from Acanthamoeba polyphaga (Amoeba).